The sequence spans 238 residues: Aspartate/glutamate leucyltransferase (238 aa).

This sequence belongs to the R-transferase family. Bpt subfamily.

It is found in the cytoplasm. It catalyses the reaction N-terminal L-glutamyl-[protein] + L-leucyl-tRNA(Leu) = N-terminal L-leucyl-L-glutamyl-[protein] + tRNA(Leu) + H(+). It carries out the reaction N-terminal L-aspartyl-[protein] + L-leucyl-tRNA(Leu) = N-terminal L-leucyl-L-aspartyl-[protein] + tRNA(Leu) + H(+). Functionally, functions in the N-end rule pathway of protein degradation where it conjugates Leu from its aminoacyl-tRNA to the N-termini of proteins containing an N-terminal aspartate or glutamate. The sequence is that of Aspartate/glutamate leucyltransferase from Shewanella sp. (strain ANA-3).